We begin with the raw amino-acid sequence, 511 residues long: ATP synthase subunit alpha (511 aa).

169 to 176 (GDRQTGKT) is a binding site for ATP.

This sequence belongs to the ATPase alpha/beta chains family. As to quaternary structure, F-type ATPases have 2 components, CF(1) - the catalytic core - and CF(0) - the membrane proton channel. CF(1) has five subunits: alpha(3), beta(3), gamma(1), delta(1), epsilon(1). CF(0) has three main subunits: a(1), b(2) and c(9-12). The alpha and beta chains form an alternating ring which encloses part of the gamma chain. CF(1) is attached to CF(0) by a central stalk formed by the gamma and epsilon chains, while a peripheral stalk is formed by the delta and b chains.

Its subcellular location is the cell inner membrane. It carries out the reaction ATP + H2O + 4 H(+)(in) = ADP + phosphate + 5 H(+)(out). Produces ATP from ADP in the presence of a proton gradient across the membrane. The alpha chain is a regulatory subunit. The protein is ATP synthase subunit alpha of Bartonella henselae (strain ATCC 49882 / DSM 28221 / CCUG 30454 / Houston 1) (Rochalimaea henselae).